The sequence spans 166 residues: NADH-quinone oxidoreductase subunit B (166 aa).

Cys-44, Cys-45, Cys-110, and Cys-140 together coordinate [4Fe-4S] cluster.

This sequence belongs to the complex I 20 kDa subunit family. NDH-1 is composed of 14 different subunits. Subunits NuoB, C, D, E, F, and G constitute the peripheral sector of the complex. It depends on [4Fe-4S] cluster as a cofactor.

The protein localises to the cell membrane. It carries out the reaction a quinone + NADH + 5 H(+)(in) = a quinol + NAD(+) + 4 H(+)(out). NDH-1 shuttles electrons from NADH, via FMN and iron-sulfur (Fe-S) centers, to quinones in the respiratory chain. The immediate electron acceptor for the enzyme in this species is believed to be a menaquinone. Couples the redox reaction to proton translocation (for every two electrons transferred, four hydrogen ions are translocated across the cytoplasmic membrane), and thus conserves the redox energy in a proton gradient. In Carboxydothermus hydrogenoformans (strain ATCC BAA-161 / DSM 6008 / Z-2901), this protein is NADH-quinone oxidoreductase subunit B.